A 765-amino-acid polypeptide reads, in one-letter code: E3 ubiquitin-protein ligase SlrP (765 aa).

The interaction with target proteins stretch occupies residues 1–451 (MFNITNIQST…VDYQGPRVLF (451 aa)). LRR repeat units lie at residues 200–219 (QITT…ENLQ), 221–242 (NIKT…LPDT), 243–262 (IQEM…RLPS), 263–284 (ALQS…LPEE), 285–305 (LRYL…LPSG), 306–325 (ITHL…TLPP), 326–346 (GLKT…SLPP), 347–368 (ELQV…LPPT), 369–389 (ITTL…LPAA), and 390–410 (LQIM…LPHF). The linker stretch occupies residues 452–461 (AMGDFSIVRV). The interval 462–765 (TRPLHQAVQG…VSSLMSAYWR (304 aa)) is E3 ubiquitin-protein ligase catalytic domain. The NEL domain occupies 464–758 (PLHQAVQGWL…NILLKKEVSS (295 aa)). The active-site Glycyl thioester intermediate is C546.

The protein belongs to the LRR-containing bacterial E3 ligase family. As to quaternary structure, interacts with host TXN. In terms of processing, ubiquitinated in the presence of host E1 ubiquitin-activating enzyme, E2 ubiquitin-conjugating enzyme and ubiquitin.

The protein resides in the secreted. It is found in the host cytoplasm. It carries out the reaction S-ubiquitinyl-[E2 ubiquitin-conjugating enzyme]-L-cysteine + [acceptor protein]-L-lysine = [E2 ubiquitin-conjugating enzyme]-L-cysteine + N(6)-ubiquitinyl-[acceptor protein]-L-lysine.. Its activity is regulated as follows. Binding to TXN is inhibited by hydrogen peroxide in vitro. Its function is as follows. Effector proteins function to alter host cell physiology and promote bacterial survival in host tissues. This protein is an E3 ubiquitin ligase that interferes with host's ubiquitination pathway. Can ubiquitinate both ubiquitin and host TXN (thioredoxin). Leads to significant decrease of thioredoxin activity and increase of host cell death. This is E3 ubiquitin-protein ligase SlrP (slrP) from Salmonella typhimurium (strain LT2 / SGSC1412 / ATCC 700720).